The sequence spans 576 residues: V-type ATP synthase alpha chain (576 aa).

238–245 (GPFGAGKT) contacts ATP.

The protein belongs to the ATPase alpha/beta chains family.

It catalyses the reaction ATP + H2O + 4 H(+)(in) = ADP + phosphate + 5 H(+)(out). Produces ATP from ADP in the presence of a proton gradient across the membrane. The V-type alpha chain is a catalytic subunit. This is V-type ATP synthase alpha chain from Borrelia recurrentis (strain A1).